The following is a 1892-amino-acid chain: Alpha-2-macroglobulin (1892 aa).

An N-terminal signal peptide occupies residues 1 to 23 (MKNIFRKFVFTIFVCLINLQLIA). The segment at residues 1441–1444 (CTEQ) is a cross-link (isoglutamyl cysteine thioester (Cys-Gln)).

It belongs to the protease inhibitor I39 (alpha-2-macroglobulin) family. Bacterial alpha-2-macroglobulin subfamily.

Protects the bacterial cell from host peptidases. This is Alpha-2-macroglobulin from Rickettsia conorii (strain ATCC VR-613 / Malish 7).